The sequence spans 245 residues: MVVGTSCQPQHGLYLLLLLLALPLRSQANAGCYGIPGMPGLPGTPGKDGHDGLQGPKGEPGIPAIPGTQGPKGQKGEPGMPGHRGKNGPMGTSGSPGDPGPRGPPGEPGEEGRYKQKHQSVFTVTRQTAQYPAANGLVKFNSAITNPQGDYNTNTGKFTCKVPGLYYFVHHTSQTANLCVQLLLNNAKVTSFCDHMSNSKQVSSGGVLLRLQRGDEVWLAVNDYNGMVGTEGSDSVFSGFLLFPD.

The N-terminal stretch at 1–28 is a signal peptide; that stretch reads MVVGTSCQPQHGLYLLLLLLALPLRSQA. A Collagen-like domain is found at 31–112; that stretch reads GCYGIPGMPG…GPPGEPGEEG (82 aa). 4-hydroxyproline occurs at positions 36, 39, 42, 45, and 63. Residues 42-119 are disordered; it reads PGTPGKDGHD…EEGRYKQKHQ (78 aa). Position 75 is a 5-hydroxylysine (Lys-75). Lys-75 is a glycosylation site (O-linked (Gal...) hydroxylysine). Residues Pro-81, Pro-96, Pro-99, and Pro-105 each carry the 4-hydroxyproline modification. Over residues 98–107 the composition is skewed to pro residues; the sequence is DPGPRGPPGE. The 131-residue stretch at 115–245 folds into the C1q domain; the sequence is KQKHQSVFTV…VFSGFLLFPD (131 aa). Cys-179 and Cys-193 are oxidised to a cystine.

As to quaternary structure, core component of the complement C1 complex, a calcium-dependent complex composed of 1 molecule of the C1Q subcomplex, 2 molecules of C1R and 2 molecules of C1S. The C1Q subcomplex is composed 18 subunits: 3 chains of C1QA, C1QB, and C1QC trimerize to form 6 collagen-like triple helices connected to six globular ligand-recognition modules (C1q domain). Post-translationally, O-linked glycans consist of Glc-Gal disaccharides bound to the oxygen atom of post-translationally added hydroxyl groups.

The protein localises to the secreted. Its subcellular location is the cell surface. The C1Q subcomplex is inhibited by sulfated molecules, such as triterpenoid sulfates, heparan sulfate, or chondroitin sulfates. Core component of the complement C1 complex, a multiprotein complex that initiates the classical pathway of the complement system, a cascade of proteins that leads to phagocytosis and breakdown of pathogens and signaling that strengthens the adaptive immune system. The classical complement pathway is initiated by the C1Q subcomplex of the C1 complex, which specifically binds IgG or IgM immunoglobulins complexed with antigens, forming antigen-antibody complexes on the surface of pathogens: C1QA, together with C1QB and C1QC, specifically recognizes and binds the Fc regions of IgG or IgM via its C1q domain. Immunoglobulin-binding activates the proenzyme C1R, which cleaves C1S, initiating the proteolytic cascade of the complement system. The C1Q subcomplex is activated by a hexamer of IgG complexed with antigens, while it is activated by a pentameric IgM. The C1Q subcomplex also recognizes and binds phosphatidylserine exposed on the surface of cells undergoing programmed cell death, possibly promoting activation of the complement system. This is Complement C1q subcomponent subunit C from Rattus norvegicus (Rat).